The primary structure comprises 105 residues: Insulin (105 aa).

A signal peptide spans 1–24 (MALWTRLVPLLALLALWAPAPAHA). Intrachain disulfides connect C31-C91, C43-C104, and C90-C95. Positions 57-82 (EVEGPQVGALELAGGPGAGGLEGPPQ) are cleaved as a propeptide — c peptide.

The protein belongs to the insulin family. Heterodimer of a B chain and an A chain linked by two disulfide bonds.

Its subcellular location is the secreted. Its function is as follows. Insulin decreases blood glucose concentration. It increases cell permeability to monosaccharides, amino acids and fatty acids. It accelerates glycolysis, the pentose phosphate cycle, and glycogen synthesis in liver. This Ovis aries (Sheep) protein is Insulin (INS).